A 122-amino-acid chain; its full sequence is Basic phospholipase A2 F15 (122 aa).

Intrachain disulfides connect Cys-26/Cys-115, Cys-28/Cys-44, Cys-43/Cys-95, Cys-49/Cys-122, Cys-50/Cys-88, Cys-57/Cys-81, and Cys-75/Cys-86. The Ca(2+) site is built by Tyr-27, Gly-29, and Gly-31. His-47 is an active-site residue. Asp-48 is a Ca(2+) binding site. Residue Asp-89 is part of the active site.

It belongs to the phospholipase A2 family. Group II subfamily. D49 sub-subfamily. In terms of assembly, when this protein is associated with crotapotin (F5 or F7), it forms the crotoxin protein. The cofactor is Ca(2+). In terms of tissue distribution, expressed by the venom gland.

The protein resides in the secreted. It catalyses the reaction a 1,2-diacyl-sn-glycero-3-phosphocholine + H2O = a 1-acyl-sn-glycero-3-phosphocholine + a fatty acid + H(+). Its activity is regulated as follows. Activated by heparin. Inhibited by its chaperone crotapotin. In terms of biological role, snake venom phospholipase A2 (PLA2) that shows moderate neurotoxic activity in isolated mouse phrenic nerve diaphragm but shows high neurotoxic activity in a chick biventer cervis preparation. Also shows a high bactericidal effect against both Gram-negative and Gram-positive bacteria. PLA2 catalyzes the calcium-dependent hydrolysis of the 2-acyl groups in 3-sn-phosphoglycerides. The chain is Basic phospholipase A2 F15 from Crotalus durissus terrificus (South American rattlesnake).